The following is a 214-amino-acid chain: MRIILLGAPGAGKGTQAQFIMDKYGIPQISTGDMLRAAIKAGTELGKQAKSVIDAGQLVSDEIILGLVKERIAQEDCAKGFLLDGFPRTIPQADGLKENGVSIDYVLEFDVADEVIVERMSGRRAHLPSGRTYHVVYNPPKEEGKDDETGEPLVIREDDKPETVLARLGIYHEQTAPLIAYYNKEAEAGNTKYLKFDGTKLVAEVSAEIEKALA.

Residue 10 to 15 coordinates ATP; the sequence is GAGKGT. The tract at residues 30–59 is NMP; sequence STGDMLRAAIKAGTELGKQAKSVIDAGQLV. Residues Thr-31, Arg-36, 57–59, 85–88, and Gln-92 each bind AMP; these read QLV and GFPR. The interval 122–159 is LID; the sequence is GRRAHLPSGRTYHVVYNPPKEEGKDDETGEPLVIREDD. ATP contacts are provided by residues Arg-123 and 132–133; that span reads TY. 2 residues coordinate AMP: Arg-156 and Arg-167. Lys-200 serves as a coordination point for ATP.

It belongs to the adenylate kinase family. As to quaternary structure, monomer.

The protein resides in the cytoplasm. It carries out the reaction AMP + ATP = 2 ADP. Its pathway is purine metabolism; AMP biosynthesis via salvage pathway; AMP from ADP: step 1/1. Its function is as follows. Catalyzes the reversible transfer of the terminal phosphate group between ATP and AMP. Plays an important role in cellular energy homeostasis and in adenine nucleotide metabolism. This Aliivibrio fischeri (strain ATCC 700601 / ES114) (Vibrio fischeri) protein is Adenylate kinase.